Here is a 466-residue protein sequence, read N- to C-terminus: Histidine--tRNA ligase (466 aa).

It belongs to the class-II aminoacyl-tRNA synthetase family. Homodimer.

The protein localises to the cytoplasm. The catalysed reaction is tRNA(His) + L-histidine + ATP = L-histidyl-tRNA(His) + AMP + diphosphate + H(+). This Xylella fastidiosa (strain 9a5c) protein is Histidine--tRNA ligase (hisS).